Here is a 400-residue protein sequence, read N- to C-terminus: NADH dehydrogenase-like protein Rv1812c (400 aa).

Belongs to the NADH dehydrogenase family. Requires FAD as cofactor.

The sequence is that of NADH dehydrogenase-like protein Rv1812c from Mycobacterium tuberculosis (strain ATCC 25618 / H37Rv).